The sequence spans 209 residues: LexA repressor (209 aa).

Positions 29-49 form a DNA-binding region, H-T-H motif; sequence VREIGSAIGLSSTSTVHGHID. Catalysis depends on for autocatalytic cleavage activity residues Ser-130 and Lys-168.

The protein belongs to the peptidase S24 family. In terms of assembly, homodimer.

The catalysed reaction is Hydrolysis of Ala-|-Gly bond in repressor LexA.. Functionally, represses a number of genes involved in the response to DNA damage (SOS response), including recA and lexA. In the presence of single-stranded DNA, RecA interacts with LexA causing an autocatalytic cleavage which disrupts the DNA-binding part of LexA, leading to derepression of the SOS regulon and eventually DNA repair. This is LexA repressor from Pediococcus pentosaceus (strain ATCC 25745 / CCUG 21536 / LMG 10740 / 183-1w).